A 297-amino-acid chain; its full sequence is ER membrane protein complex subunit 2 (297 aa).

Position 2 is an N-acetylalanine (Ala2). 3 TPR repeats span residues 87-120, 155-188, and 192-225; these read HRVK…DPTN, QEAW…NPHN, and CQQY…NNRN. Lys255 carries the N6-acetyllysine modification.

This sequence belongs to the EMC2 family. As to quaternary structure, component of the ER membrane protein complex (EMC). Interacts with WNK1 (via amphipathic alpha-helix region); promoting the ER membrane protein complex assembly by preventing EMC2 ubiquitination. Ubiquitinated when soluble in the cytoplasm, leading to its degradation by the proteasome. Interaction with EMC2 prevents its ubiquitination and degradation.

It is found in the endoplasmic reticulum membrane. Its function is as follows. Part of the endoplasmic reticulum membrane protein complex (EMC) that enables the energy-independent insertion into endoplasmic reticulum membranes of newly synthesized membrane proteins. Preferentially accommodates proteins with transmembrane domains that are weakly hydrophobic or contain destabilizing features such as charged and aromatic residues. Involved in the cotranslational insertion of multi-pass membrane proteins in which stop-transfer membrane-anchor sequences become ER membrane spanning helices. It is also required for the post-translational insertion of tail-anchored/TA proteins in endoplasmic reticulum membranes. By mediating the proper cotranslational insertion of N-terminal transmembrane domains in an N-exo topology, with translocated N-terminus in the lumen of the ER, controls the topology of multi-pass membrane proteins like the G protein-coupled receptors. By regulating the insertion of various proteins in membranes, it is indirectly involved in many cellular processes. The chain is ER membrane protein complex subunit 2 from Homo sapiens (Human).